A 141-amino-acid chain; its full sequence is Nucleoside diphosphate kinase (141 aa).

Lysine 11, phenylalanine 59, arginine 87, threonine 93, arginine 104, and asparagine 114 together coordinate ATP. Histidine 117 functions as the Pros-phosphohistidine intermediate in the catalytic mechanism.

Belongs to the NDK family. In terms of assembly, homotetramer. Requires Mg(2+) as cofactor.

It is found in the cytoplasm. The catalysed reaction is a 2'-deoxyribonucleoside 5'-diphosphate + ATP = a 2'-deoxyribonucleoside 5'-triphosphate + ADP. It carries out the reaction a ribonucleoside 5'-diphosphate + ATP = a ribonucleoside 5'-triphosphate + ADP. In terms of biological role, major role in the synthesis of nucleoside triphosphates other than ATP. The ATP gamma phosphate is transferred to the NDP beta phosphate via a ping-pong mechanism, using a phosphorylated active-site intermediate. In Pseudomonas fluorescens (strain ATCC BAA-477 / NRRL B-23932 / Pf-5), this protein is Nucleoside diphosphate kinase.